A 597-amino-acid chain; its full sequence is Elongation factor 4 (597 aa).

Residues 2 to 184 (DHIRNFSIIA…ALIAKVPPPK (183 aa)) enclose the tr-type G domain. Residues 14–19 (DHGKST) and 131–134 (NKID) contribute to the GTP site.

Belongs to the TRAFAC class translation factor GTPase superfamily. Classic translation factor GTPase family. LepA subfamily.

It is found in the cell inner membrane. It catalyses the reaction GTP + H2O = GDP + phosphate + H(+). In terms of biological role, required for accurate and efficient protein synthesis under certain stress conditions. May act as a fidelity factor of the translation reaction, by catalyzing a one-codon backward translocation of tRNAs on improperly translocated ribosomes. Back-translocation proceeds from a post-translocation (POST) complex to a pre-translocation (PRE) complex, thus giving elongation factor G a second chance to translocate the tRNAs correctly. Binds to ribosomes in a GTP-dependent manner. The chain is Elongation factor 4 from Burkholderia multivorans (strain ATCC 17616 / 249).